The sequence spans 295 residues: Nucleotide-binding protein CMS1991 (295 aa).

ATP is bound at residue 19 to 26; sequence GMSGAGRS. 70–73 is a GTP binding site; sequence DVRG.

The protein belongs to the RapZ-like family.

Its function is as follows. Displays ATPase and GTPase activities. The sequence is that of Nucleotide-binding protein CMS1991 from Clavibacter sepedonicus (Clavibacter michiganensis subsp. sepedonicus).